The chain runs to 361 residues: Nicotinate-nucleotide--dimethylbenzimidazole phosphoribosyltransferase (361 aa).

Glu-314 serves as the catalytic Proton acceptor.

Belongs to the CobT family.

It catalyses the reaction 5,6-dimethylbenzimidazole + nicotinate beta-D-ribonucleotide = alpha-ribazole 5'-phosphate + nicotinate + H(+). The protein operates within nucleoside biosynthesis; alpha-ribazole biosynthesis; alpha-ribazole from 5,6-dimethylbenzimidazole: step 1/2. In terms of biological role, catalyzes the synthesis of alpha-ribazole-5'-phosphate from nicotinate mononucleotide (NAMN) and 5,6-dimethylbenzimidazole (DMB). This Mycobacterium bovis (strain BCG / Pasteur 1173P2) protein is Nicotinate-nucleotide--dimethylbenzimidazole phosphoribosyltransferase.